A 119-amino-acid chain; its full sequence is Large ribosomal subunit protein uL18 (119 aa).

This sequence belongs to the universal ribosomal protein uL18 family. In terms of assembly, part of the 50S ribosomal subunit; part of the 5S rRNA/L5/L18/L25 subcomplex. Contacts the 5S and 23S rRNAs.

This is one of the proteins that bind and probably mediate the attachment of the 5S RNA into the large ribosomal subunit, where it forms part of the central protuberance. The sequence is that of Large ribosomal subunit protein uL18 from Chelativorans sp. (strain BNC1).